A 147-amino-acid polypeptide reads, in one-letter code: Thyrotropin subunit beta (147 aa).

An N-terminal signal peptide occupies residues 1–20; the sequence is MRVVLLASGVLCLLAGQVLS. 6 disulfide bridges follow: Cys-22–Cys-72, Cys-36–Cys-87, Cys-39–Cys-126, Cys-47–Cys-103, Cys-51–Cys-105, and Cys-108–Cys-115. N-linked (GlcNAc...) asparagine glycosylation occurs at Asn-43.

This sequence belongs to the glycoprotein hormones subunit beta family. Heterodimer of a common alpha chain and a unique beta chain which confers biological specificity to thyrotropin, lutropin, follitropin and gonadotropin.

The protein localises to the secreted. Functionally, indispensable for the control of thyroid structure and metabolism. May play some role in the biological processes of the immature fishes. The protein is Thyrotropin subunit beta (tshb) of Anguilla japonica (Japanese eel).